Consider the following 331-residue polypeptide: Anthranilate phosphoribosyltransferase (331 aa).

5-phospho-alpha-D-ribose 1-diphosphate is bound by residues G79, 82-83, S87, 89-92, 107-115, and S119; these read GD, NIST, and KHCNGNISS. Residue G79 participates in anthranilate binding. Position 91 (S91) interacts with Mg(2+). Position 110 (N110) interacts with anthranilate. R165 provides a ligand contact to anthranilate. Positions 223 and 224 each coordinate Mg(2+).

It belongs to the anthranilate phosphoribosyltransferase family. In terms of assembly, homodimer. It depends on Mg(2+) as a cofactor.

The enzyme catalyses N-(5-phospho-beta-D-ribosyl)anthranilate + diphosphate = 5-phospho-alpha-D-ribose 1-diphosphate + anthranilate. Its pathway is amino-acid biosynthesis; L-tryptophan biosynthesis; L-tryptophan from chorismate: step 2/5. In terms of biological role, catalyzes the transfer of the phosphoribosyl group of 5-phosphorylribose-1-pyrophosphate (PRPP) to anthranilate to yield N-(5'-phosphoribosyl)-anthranilate (PRA). In Buchnera aphidicola subsp. Baizongia pistaciae (strain Bp), this protein is Anthranilate phosphoribosyltransferase.